Reading from the N-terminus, the 406-residue chain is Vacuole membrane protein 1 (406 aa).

Positions 1-20 (MAENGKNCDQRRVAMNKEQH) are enriched in basic and acidic residues. The disordered stretch occupies residues 1–36 (MAENGKNCDQRRVAMNKEQHNGNFTDPSSVNEKKRR). At A2 the chain carries N-acetylalanine. Residues 2 to 43 (AENGKNCDQRRVAMNKEQHNGNFTDPSSVNEKKRREREERQN) lie on the Cytoplasmic side of the membrane. Positions 21–30 (NGNFTDPSSV) are enriched in polar residues. A helical transmembrane segment spans residues 44–64 (IVLWRQPLITLQYFSLEILVI). Residues 65 to 77 (LKEWTSKLWHRQS) are Extracellular-facing. The chain crosses the membrane as a helical span at residues 78-98 (IVVSFLLLLAVLIATYYVEGA). The Cytoplasmic portion of the chain corresponds to 99 to 109 (HQQYVQRIEKQ). The chain crosses the membrane as a helical span at residues 110-130 (FLLYAYWIGLGILSSVGLGTG). The Extracellular portion of the chain corresponds to 131 to 250 (LHTFLLYLGP…ASRAKLAVQK (120 aa)). The VTT domain stretch occupies residues 173–316 (GTEGTISLWS…FVIITFSKHI (144 aa)). Residues 251–271 (LVQKVGFFGILACASIPNPLF) traverse the membrane as a helical segment. Residues 272–273 (DL) are Cytoplasmic-facing. A helical transmembrane segment spans residues 274-294 (AGITCGHFLVPFWTFFGATLI). Residues 295-305 (GKAIIKMHIQK) lie on the Extracellular side of the membrane. Residues 306–326 (IFVIITFSKHIVEQMVAFIGA) traverse the membrane as a helical segment. At 327 to 363 (VPGIGPSLQKPFQEYLEAQRQKLHHKSEMGTPQGENW) the chain is on the cytoplasmic side. The chain crosses the membrane as a helical span at residues 364 to 384 (LSWMFEKLVVVMVCYFILSII). The Extracellular portion of the chain corresponds to 385-406 (NSMAQSYAKRIQQRLNSEEKTK).

The protein belongs to the VMP1 family. Interacts with BECN1. Interacts with TJP1. Interacts with TP53INP2. Interacts with TMEM41B. Interacts with ATP2A2, PLN and SLN; competes with PLN and SLN to prevent them from forming an inhibitory complex with ATP2A2. Interacts with ATG2A.

It is found in the endoplasmic reticulum-Golgi intermediate compartment membrane. The protein resides in the cell membrane. Its subcellular location is the vacuole membrane. It localises to the endoplasmic reticulum membrane. The catalysed reaction is a 1,2-diacyl-sn-glycero-3-phospho-L-serine(in) = a 1,2-diacyl-sn-glycero-3-phospho-L-serine(out). The enzyme catalyses cholesterol(in) = cholesterol(out). It carries out the reaction a 1,2-diacyl-sn-glycero-3-phosphocholine(in) = a 1,2-diacyl-sn-glycero-3-phosphocholine(out). It catalyses the reaction a 1,2-diacyl-sn-glycero-3-phosphoethanolamine(in) = a 1,2-diacyl-sn-glycero-3-phosphoethanolamine(out). Its function is as follows. Phospholipid scramblase involved in lipid homeostasis and membrane dynamics processes. Has phospholipid scramblase activity toward cholesterol and phosphatidylserine, as well as phosphatidylethanolamine and phosphatidylcholine. Required for autophagosome formation: participates in early stages of autophagosome biogenesis at the endoplasmic reticulum (ER) membrane by reequilibrating the leaflets of the ER as lipids are extracted by ATG2 (ATG2A or ATG2B) to mediate autophagosome assembly. Regulates ATP2A2 activity to control ER-isolation membrane contacts for autophagosome formation. In addition to autophagy, involved in other processes in which phospholipid scramblase activity is required. Modulates ER contacts with lipid droplets, mitochondria and endosomes. Plays an essential role in formation of cell junctions. Upon stress such as bacterial and viral infection, promotes formation of cytoplasmic vacuoles followed by cell death. Involved in the cytoplasmic vacuolization of acinar cells during the early stage of acute pancreatitis. The sequence is that of Vacuole membrane protein 1 from Pongo abelii (Sumatran orangutan).